The following is a 332-amino-acid chain: tRNA dimethylallyltransferase (332 aa).

Position 17 to 24 (17 to 24 (GPTCSGKS)) interacts with ATP. 19 to 24 (TCSGKS) is a binding site for substrate. Interaction with substrate tRNA stretches follow at residues 42 to 45 (DSMQ) and 166 to 170 (QRVAR).

The protein belongs to the IPP transferase family. Monomer. Mg(2+) serves as cofactor.

It carries out the reaction adenosine(37) in tRNA + dimethylallyl diphosphate = N(6)-dimethylallyladenosine(37) in tRNA + diphosphate. Its function is as follows. Catalyzes the transfer of a dimethylallyl group onto the adenine at position 37 in tRNAs that read codons beginning with uridine, leading to the formation of N6-(dimethylallyl)adenosine (i(6)A). The chain is tRNA dimethylallyltransferase from Gluconacetobacter diazotrophicus (strain ATCC 49037 / DSM 5601 / CCUG 37298 / CIP 103539 / LMG 7603 / PAl5).